Here is a 276-residue protein sequence, read N- to C-terminus: MLMITSFANPRVAQAFVDYMATQGVILTIQQHNQSDVWLADESQAERVRAELARFLENPADPRYLAASWQAGHTGSGLHYRRYPFFAALRERAGPVTWVVMIACVVVFIAMQILGDQEVMLWLAWPFDPTLKFEFWRYFTHALMHFSLMHILFNLLWWWYLGGAVEKRLGSGKLIVITLISALLSGYVQQKFSGPWFGGLSGVVYALMGYVWLRGERDPQSGIYLQRGLIIFALIWIIAGWFDLFGMSMANGAHIAGLAVGLAMAFVDSLNARKRK.

Helical transmembrane passes span 94 to 114 (GPVT…MQIL), 142 to 162 (ALMH…WYLG), 169 to 189 (LGSG…GYVQ), 192 to 212 (FSGP…GYVW), 229 to 249 (LIIF…GMSM), and 250 to 270 (ANGA…VDSL). Ser-201 serves as the catalytic Nucleophile. His-254 is an active-site residue.

It belongs to the peptidase S54 family.

Its subcellular location is the cell inner membrane. It carries out the reaction Cleaves type-1 transmembrane domains using a catalytic dyad composed of serine and histidine that are contributed by different transmembrane domains.. In terms of biological role, rhomboid-type serine protease that catalyzes intramembrane proteolysis. The sequence is that of Rhomboid protease GlpG from Shigella boydii serotype 4 (strain Sb227).